The sequence spans 190 residues: MPRANEIKKGMVLNYNGKLLIVKDIDIQSPSARGAATLYKMRFSDVRTGQKVEERFKGDDILDTITLTRRFVDFSYVDGNEYVFMDKEDYTPYTFTKDQIEEELLFMPEGGMPDMQVLTWDGQLLALELPQTVDLEIVETAPGIKGASASARSKPATLSTGVVIQVPEYLSAGEKIRVHIAERRYMGRAE.

The protein belongs to the elongation factor P family.

The chain is Elongation factor P-like protein from Cronobacter sakazakii (strain ATCC BAA-894) (Enterobacter sakazakii).